The sequence spans 440 residues: Damage-control phosphatase ARMT1 (440 aa).

Mn(2+)-binding residues include aspartate 252 and asparagine 253. 252–253 (DN) contacts substrate. 2 residues coordinate S-adenosyl-L-methionine: glutamate 257 and aspartate 290. Aspartate 290 contacts Mn(2+). Residues 366–370 (DLNYR) and lysine 403 contribute to the substrate site. Positions 400–403 (RTLK) match the Subfamily III RTxK motif motif.

It belongs to the damage-control phosphatase family. Sugar phosphate phosphatase III subfamily. The cofactor is Mn(2+). Ni(2+) serves as cofactor. Automethylated.

The catalysed reaction is beta-D-fructose 1-phosphate + H2O = D-fructose + phosphate. It catalyses the reaction beta-D-fructose 6-phosphate = dihydroxyacetone + D-glyceraldehyde 3-phosphate. It carries out the reaction L-glutamyl-[protein] + S-adenosyl-L-methionine = [protein]-L-glutamate 5-O-methyl ester + S-adenosyl-L-homocysteine. Metal-dependent phosphatase that shows phosphatase activity against several substrates, including fructose-1-phosphate and fructose-6-phosphate. Its preference for fructose-1-phosphate, a strong glycating agent that causes DNA damage rather than a canonical yeast metabolite, suggests a damage-control function in hexose phosphate metabolism. Has also been shown to have O-methyltransferase activity that methylates glutamate residues of target proteins to form gamma-glutamyl methyl ester residues. Possibly methylates PCNA, suggesting it is involved in the DNA damage response. The protein is Damage-control phosphatase ARMT1 of Xenopus tropicalis (Western clawed frog).